Consider the following 498-residue polypeptide: Delta(14)-sterol reductase erg24A (498 aa).

Helical transmembrane passes span 30–50 (LGAF…TFLC), 91–111 (VTVW…FLPG), 136–156 (ILIL…FVVW), and 163–183 (YVQI…FVYA). Residue Asn-257 is glycosylated (N-linked (GlcNAc...) asparagine). Transmembrane regions (helical) follow at residues 275–295 (IVLS…MEPA), 302–322 (VIMD…VPFI), and 339–359 (LREI…FRGA). NADP(+) is bound by residues Lys-363, Arg-367, Trp-395, and 402 to 403 (NY). Asn-429 carries an N-linked (GlcNAc...) asparagine glycan. The helical transmembrane segment at 444–464 (VRGWGMIFTYFFLVYFGALLI) threads the bilayer. Residues Asp-470, 474–478 (CKSKY), and Tyr-485 contribute to the NADP(+) site.

The protein belongs to the ERG4/ERG24 family.

It localises to the endoplasmic reticulum membrane. The protein operates within steroid metabolism; ergosterol biosynthesis. Its function is as follows. Delta(14)-sterol reductase; part of the third module of ergosterol biosynthesis pathway that includes the late steps of the pathway. Catalyzes the reduction of the C14=C15 double bond within 4,4,24-trimethyl ergosta-8,14,24(28)-trienolto produce 4,4-dimethylfecosterol. The third module or late pathway involves the ergosterol synthesis itself through consecutive reactions that mainly occur in the endoplasmic reticulum (ER) membrane. Firstly, the squalene synthase erg9 catalyzes the condensation of 2 farnesyl pyrophosphate moieties to form squalene, which is the precursor of all steroids. Squalene synthase is crucial for balancing the incorporation of farnesyl diphosphate (FPP) into sterol and nonsterol isoprene synthesis. Secondly, squalene is converted into lanosterol by the consecutive action of the squalene epoxidase erg1 and the lanosterol synthase erg7. Then, the delta(24)-sterol C-methyltransferase erg6 methylates lanosterol at C-24 to produce eburicol. Eburicol is the substrate of the sterol 14-alpha demethylase encoded by cyp51A and cyp51B, to yield 4,4,24-trimethyl ergosta-8,14,24(28)-trienol. The C-14 reductase erg24 then reduces the C14=C15 double bond which leads to 4,4-dimethylfecosterol. A sequence of further demethylations at C-4, involving the C-4 demethylation complex containing the C-4 methylsterol oxidases erg25A or erg25B, the sterol-4-alpha-carboxylate 3-dehydrogenase erg26 and the 3-keto-steroid reductase erg27, leads to the production of fecosterol via 4-methylfecosterol. The C-8 sterol isomerase erg2 then catalyzes the reaction which results in unsaturation at C-7 in the B ring of sterols and thus converts fecosterol to episterol. The sterol-C5-desaturase erg3B then catalyzes the introduction of a C-5 double bond in the B ring to produce 5-dehydroepisterol. The 2 other sterol-C5-desaturases, erg3A and erg3C, seem to be less important in ergosterol biosynthesis. The C-22 sterol desaturase erg5 further converts 5-dehydroepisterol into ergosta-5,7,22,24(28)-tetraen-3beta-ol by forming the C-22(23) double bond in the sterol side chain. Finally, ergosta-5,7,22,24(28)-tetraen-3beta-ol is substrate of the C-24(28) sterol reductases erg4A and erg4B to produce ergosterol. Possible alternative sterol biosynthetic pathways might exist from fecosterol to ergosterol, depending on the activities of the erg3 isoforms. This Aspergillus fumigatus (strain ATCC MYA-4609 / CBS 101355 / FGSC A1100 / Af293) (Neosartorya fumigata) protein is Delta(14)-sterol reductase erg24A.